Reading from the N-terminus, the 207-residue chain is C-type lectin domain family 2 member D (207 aa).

Over 1–41 the chain is Cytoplasmic; the sequence is MCVTKASLPMLSPTGSPQEVEVGKILQGKRHGTISPESCAK. Ser7 and Ser12 each carry phosphoserine. The chain crosses the membrane as a helical; Signal-anchor for type II membrane protein span at residues 42-62; the sequence is LYCYYGVIMVLTVAVIALSVA. The Extracellular portion of the chain corresponds to 63-207; the sequence is LSATKTEQIP…LHCQTPFFPS (145 aa). The cysteines at positions 80 and 91 are disulfide-linked. Residues 87–202 form the C-type lectin domain; the sequence is VENKCFYFSE…LNSYSLHCQT (116 aa). A glycan (N-linked (GlcNAc...) asparagine) is linked at Asn100.

Homodimer; disulfide-linked. In terms of processing, N-glycosylated. As to expression, detected in fetal heart, brain, lung, chondrocytes, perichondrium and osteoblasts, and in adult splenocytes, thymocytes, lymph-node cells, osteoblasts, growth plate chondrocytes and skeletal muscle overlying the bone (at protein level). Ubiquitous. Detected in thymus, bone marrow, lung, gut, heart, skeletal muscle, ovary, spleen, ileum, liver and kidney.

It localises to the cell membrane. Functionally, receptor for KLRB1B that protects target cells against natural killer cell-mediated lysis. Inhibits osteoclast formation. Binds high molecular weight sulfated glycosaminoglycans. In Mus musculus (Mouse), this protein is C-type lectin domain family 2 member D (Clec2d).